We begin with the raw amino-acid sequence, 147 residues long: Hemoglobin subunit beta (147 aa).

Position 2 is an N-acetylvaline (V2). Residues 3 to 147 (HLTPEEKNAV…VANALAHKYH (145 aa)) enclose the Globin domain. Residue T13 is modified to Phosphothreonine. A Phosphoserine modification is found at S45. K60 is subject to N6-acetyllysine. H64 provides a ligand contact to heme b. Residue K83 is modified to N6-acetyllysine. H93 provides a ligand contact to heme b. At C94 the chain carries S-nitrosocysteine. Position 145 is an N6-acetyllysine (K145).

The protein belongs to the globin family. In terms of assembly, heterotetramer of two alpha chains and two beta chains. In terms of tissue distribution, red blood cells.

In terms of biological role, involved in oxygen transport from the lung to the various peripheral tissues. This Papio anubis (Olive baboon) protein is Hemoglobin subunit beta (HBB).